Here is a 143-residue protein sequence, read N- to C-terminus: ATP synthase subunit 9, mitochondrial (143 aa).

A mitochondrion-targeting transit peptide spans 1–62; the sequence is MAASRVFAQR…ARQAFAARRQ (62 aa). A run of 2 helical transmembrane segments spans residues 85 to 105 and 119 to 139; these read IGLG…LLAV and AILG…VAMM.

This sequence belongs to the ATPase C chain family. F-type ATPases have 2 components, CF(1) - the catalytic core - and CF(0) - the membrane proton channel. CF(1) has five subunits: alpha(3), beta(3), gamma(1), delta(1), epsilon(1). CF(0) has three main subunits: a, b and c.

It localises to the mitochondrion membrane. Functionally, mitochondrial membrane ATP synthase (F(1)F(0) ATP synthase or Complex V) produces ATP from ADP in the presence of a proton gradient across the membrane which is generated by electron transport complexes of the respiratory chain. F-type ATPases consist of two structural domains, F(1) - containing the extramembraneous catalytic core and F(0) - containing the membrane proton channel, linked together by a central stalk and a peripheral stalk. During catalysis, ATP synthesis in the catalytic domain of F(1) is coupled via a rotary mechanism of the central stalk subunits to proton translocation. Part of the complex F(0) domain. A homomeric c-ring of probably 10 subunits is part of the complex rotary element. This chain is ATP synthase subunit 9, mitochondrial (atp9), found in Emericella nidulans (strain FGSC A4 / ATCC 38163 / CBS 112.46 / NRRL 194 / M139) (Aspergillus nidulans).